The sequence spans 343 residues: Protein RecA (343 aa).

An ATP-binding site is contributed by 65 to 72 (GPESSGKT).

The protein belongs to the RecA family.

It is found in the cytoplasm. Functionally, can catalyze the hydrolysis of ATP in the presence of single-stranded DNA, the ATP-dependent uptake of single-stranded DNA by duplex DNA, and the ATP-dependent hybridization of homologous single-stranded DNAs. It interacts with LexA causing its activation and leading to its autocatalytic cleavage. The protein is Protein RecA of Xanthomonas campestris pv. campestris (strain 8004).